The chain runs to 236 residues: Small ribosomal subunit protein uS3 (236 aa).

A KH type-2 domain is found at 39–112; sequence IREFITKHPK…RINLKVEEVG (74 aa). A disordered region spans residues 212-236; sequence YGDDNDGADAQTGQASKKPKRSYKR.

The protein belongs to the universal ribosomal protein uS3 family. In terms of assembly, part of the 30S ribosomal subunit. Forms a tight complex with proteins S10 and S14.

Functionally, binds the lower part of the 30S subunit head. Binds mRNA in the 70S ribosome, positioning it for translation. This Rhodopirellula baltica (strain DSM 10527 / NCIMB 13988 / SH1) protein is Small ribosomal subunit protein uS3.